We begin with the raw amino-acid sequence, 270 residues long: Metallo-beta-lactamase type 2 (270 aa).

The signal sequence occupies residues 1–28 (MELPNIMHPVAKLSTALAAALMLSGCMP). 5 residues coordinate Zn(2+): histidine 120, histidine 122, aspartate 124, histidine 189, and cysteine 208. Positions 211 and 220 each coordinate substrate. Histidine 250 lines the Zn(2+) pocket.

Belongs to the metallo-beta-lactamase superfamily. Class-B beta-lactamase family. As to quaternary structure, monomer. Zn(2+) serves as cofactor.

The protein resides in the periplasm. The enzyme catalyses a beta-lactam + H2O = a substituted beta-amino acid. Inhibits by captopril, thiorphan, dimercaprol and tiopronin. This enzyme is not susceptible to inactivation by the beta-lactamase-blocking agents clavulanic acid. Confers resistance to the different beta-lactams antibiotics (penicillin, cephalosporin and carbapenem) via the hydrolysis of the beta-lactam ring. Does not confer resistance to the polymixin colistin or the fluoroquinolone ciprofloxacin. The polypeptide is Metallo-beta-lactamase type 2 (Klebsiella pneumoniae).